Reading from the N-terminus, the 374-residue chain is Putative glutamate--cysteine ligase 2 (374 aa).

It belongs to the glutamate--cysteine ligase type 2 family. YbdK subfamily.

The catalysed reaction is L-cysteine + L-glutamate + ATP = gamma-L-glutamyl-L-cysteine + ADP + phosphate + H(+). ATP-dependent carboxylate-amine ligase which exhibits weak glutamate--cysteine ligase activity. The chain is Putative glutamate--cysteine ligase 2 from Verminephrobacter eiseniae (strain EF01-2).